The following is a 555-amino-acid chain: MLFAEFAEFCERLEKISSTLELTARIAAFLQKIEDERDLYDVVLFITGKVYPPWDERELGVGIGLLYEALENVSGVKRSEIESMIREYGDLGLVAEQLIKKKKMTTLAFEELTVRKVRETFDEIASLTGEGSMKRKIMLLTGLYGLATPLEARYLTRLILNEMRLGVGEGIMRDAIARAFRADPETVERAYMITNDLGRVAVVAKKEGEEGLRKMKIEIHIPVRMMLAQVAESLESAVREMRTAAVEWKFDGSRVQVHWDGSRVTIYSRRLENVTNALPDIVEEIKKSVKPGVILDGEVIAVKEGKPMPFQHVLRRFRRKHDVAKMVEKIPLEAHFFDILYHDGECIDLPLRERRKLLESAVNESEKIKLAKQIVTDSVDEVRKMYDEAISAGHEGVMIKLPSSPYIPGKRGKNWLKVKAIMETLDLVVVGGEWGEGKRSHWLSSFELACLDPVTGKLLKVGRVATGFTEEDLEELTEMFRPLIVSQQGKKVEFIPKYVFEVAYQEIQKSPKYESGYALRFPRFVRLRDDKDVDEADTIERVENLYKLQFEVKRQ.

Glutamate 247 provides a ligand contact to ATP. Lysine 249 acts as the N6-AMP-lysine intermediate in catalysis. ATP-binding residues include arginine 254, arginine 269, glutamate 298, phenylalanine 337, arginine 411, and lysine 417.

It belongs to the ATP-dependent DNA ligase family. It depends on Mg(2+) as a cofactor.

The enzyme catalyses ATP + (deoxyribonucleotide)n-3'-hydroxyl + 5'-phospho-(deoxyribonucleotide)m = (deoxyribonucleotide)n+m + AMP + diphosphate.. Its function is as follows. DNA ligase that seals nicks in double-stranded DNA during DNA replication, DNA recombination and DNA repair. This Archaeoglobus fulgidus (strain ATCC 49558 / DSM 4304 / JCM 9628 / NBRC 100126 / VC-16) protein is DNA ligase.